The primary structure comprises 183 residues: MKGGKRVQPARPNRINKEIRATEVRLTGVDGEQIGIVSLNEALEKAEEAGVDLVEISPNAEPPVCRIMDYGKFLYEKSKSTKEQKKKQKVIQVKEIKFRPGTDDGDYQVKLRNLIRFLEDGDKAKITLRFRGREMAHQQIGMEVLNRVRKDLCEDSDLAVVESFPTRIEGRQMIMVLAPKKRQ.

The protein belongs to the IF-3 family. In terms of assembly, monomer.

It is found in the cytoplasm. Functionally, IF-3 binds to the 30S ribosomal subunit and shifts the equilibrium between 70S ribosomes and their 50S and 30S subunits in favor of the free subunits, thus enhancing the availability of 30S subunits on which protein synthesis initiation begins. The sequence is that of Translation initiation factor IF-3 from Yersinia pseudotuberculosis serotype O:1b (strain IP 31758).